A 259-amino-acid polypeptide reads, in one-letter code: Thiazole synthase (259 aa).

K99 functions as the Schiff-base intermediate with DXP in the catalytic mechanism. 1-deoxy-D-xylulose 5-phosphate-binding positions include G161, A187–G188, and N209–I219.

Belongs to the ThiG family. In terms of assembly, homotetramer. Forms heterodimers with either ThiH or ThiS.

The protein resides in the cytoplasm. The enzyme catalyses [ThiS sulfur-carrier protein]-C-terminal-Gly-aminoethanethioate + 2-iminoacetate + 1-deoxy-D-xylulose 5-phosphate = [ThiS sulfur-carrier protein]-C-terminal Gly-Gly + 2-[(2R,5Z)-2-carboxy-4-methylthiazol-5(2H)-ylidene]ethyl phosphate + 2 H2O + H(+). It functions in the pathway cofactor biosynthesis; thiamine diphosphate biosynthesis. Functionally, catalyzes the rearrangement of 1-deoxy-D-xylulose 5-phosphate (DXP) to produce the thiazole phosphate moiety of thiamine. Sulfur is provided by the thiocarboxylate moiety of the carrier protein ThiS. In vitro, sulfur can be provided by H(2)S. In Aliarcobacter butzleri (strain RM4018) (Arcobacter butzleri), this protein is Thiazole synthase.